The sequence spans 197 residues: Imidazoleglycerol-phosphate dehydratase (197 aa).

The protein belongs to the imidazoleglycerol-phosphate dehydratase family.

The protein localises to the cytoplasm. The catalysed reaction is D-erythro-1-(imidazol-4-yl)glycerol 3-phosphate = 3-(imidazol-4-yl)-2-oxopropyl phosphate + H2O. It participates in amino-acid biosynthesis; L-histidine biosynthesis; L-histidine from 5-phospho-alpha-D-ribose 1-diphosphate: step 6/9. The sequence is that of Imidazoleglycerol-phosphate dehydratase from Xanthobacter autotrophicus (strain ATCC BAA-1158 / Py2).